We begin with the raw amino-acid sequence, 414 residues long: Argininosuccinate synthase (414 aa).

12–20 contacts ATP; it reads AYSGGLDTS. Residues Tyr-90 and Ser-95 each contribute to the L-citrulline site. Position 120 (Gly-120) interacts with ATP. Residues Thr-122, Asn-126, and Asp-127 each coordinate L-aspartate. Residue Asn-126 coordinates L-citrulline. L-citrulline is bound by residues Arg-130, Ser-179, Ser-188, Glu-264, and Tyr-276.

Belongs to the argininosuccinate synthase family. Type 1 subfamily. In terms of assembly, homotetramer.

The protein resides in the cytoplasm. The enzyme catalyses L-citrulline + L-aspartate + ATP = 2-(N(omega)-L-arginino)succinate + AMP + diphosphate + H(+). It participates in amino-acid biosynthesis; L-arginine biosynthesis; L-arginine from L-ornithine and carbamoyl phosphate: step 2/3. The protein is Argininosuccinate synthase of Alkaliphilus metalliredigens (strain QYMF).